The chain runs to 399 residues: Homocysteine-responsive endoplasmic reticulum-resident ubiquitin-like domain member 2 protein (399 aa).

Positions 10-89 constitute a Ubiquitin-like domain; it reads VTLVIKAPNQ…HMVHLVCASR (80 aa). 2 disordered regions span residues 88–144 and 211–250; these read SRTP…SIRH and ASNQSPSNGENAQPVPRPVINSESPPPNPPRAPPNVAPEM. Polar residues predominate over residues 95 to 106; the sequence is PKASTSNKSMGT. Residues 107–124 show a composition bias toward low complexity; the sequence is ASISRSSSEHSGSASPAS. Residues 211–221 are compositionally biased toward polar residues; it reads ASNQSPSNGEN. A compositionally biased stretch (pro residues) spans 234-246; the sequence is SPPPNPPRAPPNV. The chain crosses the membrane as a helical span at residues 299 to 319; that stretch reads FVMVMGAMILVYMHQAGWFPL.

The protein localises to the membrane. Functionally, could be involved in the unfolded protein response (UPR) pathway. This Xenopus tropicalis (Western clawed frog) protein is Homocysteine-responsive endoplasmic reticulum-resident ubiquitin-like domain member 2 protein (herpud2).